We begin with the raw amino-acid sequence, 229 residues long: Demethylmenaquinone methyltransferase (229 aa).

S-adenosyl-L-methionine is bound by residues Thr57, Asp77, and 101–102 (DV).

Belongs to the class I-like SAM-binding methyltransferase superfamily. MenG/UbiE family.

The enzyme catalyses a 2-demethylmenaquinol + S-adenosyl-L-methionine = a menaquinol + S-adenosyl-L-homocysteine + H(+). It functions in the pathway quinol/quinone metabolism; menaquinone biosynthesis; menaquinol from 1,4-dihydroxy-2-naphthoate: step 2/2. Its function is as follows. Methyltransferase required for the conversion of demethylmenaquinol (DMKH2) to menaquinol (MKH2). The protein is Demethylmenaquinone methyltransferase of Chlamydia trachomatis serovar L2 (strain ATCC VR-902B / DSM 19102 / 434/Bu).